The primary structure comprises 237 residues: Ribosomal RNA large subunit methyltransferase E (237 aa).

S-adenosyl-L-methionine is bound by residues glycine 76, tryptophan 78, aspartate 99, aspartate 115, and aspartate 139. Residue lysine 179 is the Proton acceptor of the active site.

It belongs to the class I-like SAM-binding methyltransferase superfamily. RNA methyltransferase RlmE family.

It localises to the cytoplasm. It carries out the reaction uridine(2552) in 23S rRNA + S-adenosyl-L-methionine = 2'-O-methyluridine(2552) in 23S rRNA + S-adenosyl-L-homocysteine + H(+). In terms of biological role, specifically methylates the uridine in position 2552 of 23S rRNA at the 2'-O position of the ribose in the fully assembled 50S ribosomal subunit. The protein is Ribosomal RNA large subunit methyltransferase E of Rhodopseudomonas palustris (strain ATCC BAA-98 / CGA009).